The chain runs to 108 residues: FK506-binding protein 1A (108 aa).

The segment at 1–20 (MGVEVQRISPGDGKNFPKPG) is disordered. The region spanning 20 to 108 (GDTVSIHYTG…TFEVELLKIN (89 aa)) is the PPIase FKBP-type domain.

This sequence belongs to the FKBP-type PPIase family. FKBP1 subfamily.

The protein localises to the cytoplasm. It carries out the reaction [protein]-peptidylproline (omega=180) = [protein]-peptidylproline (omega=0). Inhibited by both FK506 and rapamycin. Its function is as follows. PPIases accelerate the folding of proteins. It catalyzes the cis-trans isomerization of proline imidic peptide bonds in oligopeptides. The polypeptide is FK506-binding protein 1A (fprA) (Emericella nidulans (strain FGSC A4 / ATCC 38163 / CBS 112.46 / NRRL 194 / M139) (Aspergillus nidulans)).